Consider the following 845-residue polypeptide: MELWRQCTHWLIQCRVLPPSHRVTWDGAQVCELAQALRDGVLLCQLLNNLLPHAINLREVNLRPQMSQFLCLKNIRTFLSTCCEKFGLKRSELFEAFDLFDVQDFGKVIYTLSALSWTPIAQNRGIMPFPTEEESVGDEDIYSGLSDQIDDTVEEDEDLYDCVENEEAEGDEIYEDLMRSEPVSMPPKMTEYDKRCCCLREIQQTEEKYTDTLGSIQQHFLKPLQRFLKPQDIEIIFINIEDLLRVHTHFLKEMKEALGTPGAANLYQVFIKYKERFLVYGRYCSQVESASKHLDRVAAAREDVQMKLEECSQRANNGRFTLRDLLMVPMQRVLKYHLLLQELVKHTQEAMEKENLRLALDAMRDLAQCVNEVKRDNETLRQITNFQLSIENLDQSLAHYGRPKIDGELKITSVERRSKMDRYAFLLDKALLICKRRGDSYDLKDFVNLHSFQVRDDSSGDRDNKKWSHMFLLIEDQGAQGYELFFKTRELKKKWMEQFEMAISNIYPENATANGHDFQMFSFEETTSCKACQMLLRGTFYQGYRCHRCRASAHKECLGRVPPCGRHGQDFPGTMKKDKLHRRAQDKKRNELGLPKMEVFQEYYGLPPPPGAIGPFLRLNPGDIVELTKAEAEQNWWEGRNTSTNEIGWFPCNRVKPYVHGPPQDLSVHLWYAGPMERAGAESILANRSDGTFLVRQRVKDAAEFAISIKYNVEVKHIKIMTAEGLYRITEKKAFRGLTELVEFYQQNSLKDCFKSLDTTLQFPFKEPEKRTISRPAVGSTKYFGTAKARYDFCARDRSELSLKEGDIIKILNKKGQQGWWRGEIYGRVGWFPANYVEEDYSEYC.

Positions 1–119 (MELWRQCTHW…YTLSALSWTP (119 aa)) constitute a Calponin-homology (CH) domain. Residues 194–373 (KRCCCLREIQ…RDLAQCVNEV (180 aa)) enclose the DH domain. Residues 402 to 504 (RPKIDGELKI…WMEQFEMAIS (103 aa)) enclose the PH domain. The segment at 515–564 (GHDFQMFSFEETTSCKACQMLLRGTFYQGYRCHRCRASAHKECLGRVPPC) adopts a Phorbol-ester/DAG-type zinc-finger fold. The region spanning 592–660 (LGLPKMEVFQ…PCNRVKPYVH (69 aa)) is the SH3 1 domain. In terms of domain architecture, SH2 spans 671–765 (WYAGPMERAG…SLDTTLQFPF (95 aa)). Positions 782–842 (KYFGTAKARY…PANYVEEDYS (61 aa)) constitute an SH3 2 domain. Phosphotyrosine occurs at positions 826 and 844.

As to quaternary structure, interacts with SHB. Interacts with SH2B2, GRB2, GRB3, DOCK2, SLA, TEC and ZNF655/VIK. Interacts with SIAH2; without leading to its degradation. Associates with BLNK, PLCG1, GRB2 and NCK1 in a B-cell antigen receptor-dependent fashion. Interacts with CBLB; which inhibits tyrosine phosphorylation and down-regulates activity. May interact with CCPG1. Interacts with CLNK. Interacts with THEMIS2. Interacts with NEK3 and this interaction is prolactin-dependent. Interacts with ITK. Interacts with PTK2B/PYK2. Interacts with HCK. Interacts with PTK2B/PYK2. Interacts (via SH2 domain) with SYK. Interacts with ANKRD54. Interacts with CD6. Interacts with isoform 2 of CRACR2A. Interacts with LCP2; this interaction plays a role in TCR-mediated cytokine production. Post-translationally, phosphorylated on tyrosine residues by HCK in response to IFNG and bacterial lipopolysaccharide (LPS). Phosphorylated by FYN. As to expression, widely expressed in hematopoietic cells but not in other cell types.

Its function is as follows. Couples tyrosine kinase signals with the activation of the Rho/Rac GTPases, thus leading to cell differentiation and/or proliferation. This is Proto-oncogene vav (VAV1) from Homo sapiens (Human).